The primary structure comprises 199 residues: GTP cyclohydrolase 1 (199 aa).

Cys-89, His-92, and Cys-161 together coordinate Zn(2+).

Belongs to the GTP cyclohydrolase I family. In terms of assembly, homomer.

The enzyme catalyses GTP + H2O = 7,8-dihydroneopterin 3'-triphosphate + formate + H(+). Its pathway is cofactor biosynthesis; 7,8-dihydroneopterin triphosphate biosynthesis; 7,8-dihydroneopterin triphosphate from GTP: step 1/1. The protein is GTP cyclohydrolase 1 of Bifidobacterium longum (strain DJO10A).